The sequence spans 249 residues: Sugar fermentation stimulation protein homolog (249 aa).

The protein belongs to the SfsA family.

The polypeptide is Sugar fermentation stimulation protein homolog (Prochlorococcus marinus (strain MIT 9515)).